Here is a 393-residue protein sequence, read N- to C-terminus: NAD(P)H-quinone oxidoreductase subunit H, chloroplastic (393 aa).

It belongs to the complex I 49 kDa subunit family. As to quaternary structure, NDH is composed of at least 16 different subunits, 5 of which are encoded in the nucleus.

The protein localises to the plastid. The protein resides in the chloroplast thylakoid membrane. It catalyses the reaction a plastoquinone + NADH + (n+1) H(+)(in) = a plastoquinol + NAD(+) + n H(+)(out). The catalysed reaction is a plastoquinone + NADPH + (n+1) H(+)(in) = a plastoquinol + NADP(+) + n H(+)(out). In terms of biological role, NDH shuttles electrons from NAD(P)H:plastoquinone, via FMN and iron-sulfur (Fe-S) centers, to quinones in the photosynthetic chain and possibly in a chloroplast respiratory chain. The immediate electron acceptor for the enzyme in this species is believed to be plastoquinone. Couples the redox reaction to proton translocation, and thus conserves the redox energy in a proton gradient. This chain is NAD(P)H-quinone oxidoreductase subunit H, chloroplastic, found in Trifolium subterraneum (Subterranean clover).